We begin with the raw amino-acid sequence, 278 residues long: Formamidopyrimidine-DNA glycosylase (278 aa).

Pro-2 functions as the Schiff-base intermediate with DNA in the catalytic mechanism. The active-site Proton donor is Glu-3. The Proton donor; for beta-elimination activity role is filled by Lys-58. Residues His-92 and Arg-111 each coordinate DNA. The FPG-type zinc finger occupies 239-273 (HVYGKKGVPCERCGTPIEKIKVAQRGTHFCPKCQI). Arg-263 (proton donor; for delta-elimination activity) is an active-site residue.

Belongs to the FPG family. In terms of assembly, monomer. Zn(2+) is required as a cofactor.

It catalyses the reaction Hydrolysis of DNA containing ring-opened 7-methylguanine residues, releasing 2,6-diamino-4-hydroxy-5-(N-methyl)formamidopyrimidine.. It carries out the reaction 2'-deoxyribonucleotide-(2'-deoxyribose 5'-phosphate)-2'-deoxyribonucleotide-DNA = a 3'-end 2'-deoxyribonucleotide-(2,3-dehydro-2,3-deoxyribose 5'-phosphate)-DNA + a 5'-end 5'-phospho-2'-deoxyribonucleoside-DNA + H(+). Functionally, involved in base excision repair of DNA damaged by oxidation or by mutagenic agents. Acts as a DNA glycosylase that recognizes and removes damaged bases. Has a preference for oxidized purines, such as 7,8-dihydro-8-oxoguanine (8-oxoG). Has AP (apurinic/apyrimidinic) lyase activity and introduces nicks in the DNA strand. Cleaves the DNA backbone by beta-delta elimination to generate a single-strand break at the site of the removed base with both 3'- and 5'-phosphates. In Latilactobacillus sakei subsp. sakei (strain 23K) (Lactobacillus sakei subsp. sakei), this protein is Formamidopyrimidine-DNA glycosylase.